Here is a 391-residue protein sequence, read N- to C-terminus: S-adenosylmethionine synthase (391 aa).

Histidine 19 contacts ATP. A Mg(2+)-binding site is contributed by aspartate 21. Glutamate 47 lines the K(+) pocket. Residues glutamate 60 and glutamine 103 each coordinate L-methionine. The tract at residues 103–113 is flexible loop; the sequence is QSADIAQGVDR. Residues 168–170, 236–237, aspartate 245, 251–252, alanine 268, and lysine 272 each bind ATP; these read DGK, RF, and RK. Aspartate 245 is an L-methionine binding site. An L-methionine-binding site is contributed by lysine 276.

Belongs to the AdoMet synthase family. As to quaternary structure, homotetramer; dimer of dimers. Mg(2+) is required as a cofactor. The cofactor is K(+).

The protein resides in the cytoplasm. The catalysed reaction is L-methionine + ATP + H2O = S-adenosyl-L-methionine + phosphate + diphosphate. Its pathway is amino-acid biosynthesis; S-adenosyl-L-methionine biosynthesis; S-adenosyl-L-methionine from L-methionine: step 1/1. Catalyzes the formation of S-adenosylmethionine (AdoMet) from methionine and ATP. The overall synthetic reaction is composed of two sequential steps, AdoMet formation and the subsequent tripolyphosphate hydrolysis which occurs prior to release of AdoMet from the enzyme. The protein is S-adenosylmethionine synthase of Nitratidesulfovibrio vulgaris (strain ATCC 29579 / DSM 644 / CCUG 34227 / NCIMB 8303 / VKM B-1760 / Hildenborough) (Desulfovibrio vulgaris).